Consider the following 229-residue polypeptide: 7-cyano-7-deazaguanine synthase (229 aa).

An ATP-binding site is contributed by 12–22 (LSGGMDSCVCA). Residues Cys194, Cys202, Cys205, and Cys208 each contribute to the Zn(2+) site.

This sequence belongs to the QueC family. Zn(2+) serves as cofactor.

It carries out the reaction 7-carboxy-7-deazaguanine + NH4(+) + ATP = 7-cyano-7-deazaguanine + ADP + phosphate + H2O + H(+). The protein operates within purine metabolism; 7-cyano-7-deazaguanine biosynthesis. Functionally, catalyzes the ATP-dependent conversion of 7-carboxy-7-deazaguanine (CDG) to 7-cyano-7-deazaguanine (preQ(0)). This Acidobacterium capsulatum (strain ATCC 51196 / DSM 11244 / BCRC 80197 / JCM 7670 / NBRC 15755 / NCIMB 13165 / 161) protein is 7-cyano-7-deazaguanine synthase.